The chain runs to 623 residues: Protein Atg16l2 (623 aa).

Residues 64 to 79 are compositionally biased toward basic and acidic residues; sequence PKDAISTRHEDWREEV. Residues 64–93 are disordered; the sequence is PKDAISTRHEDWREEVSGTGPDQVSSPASL. The stretch at 116-229 forms a coiled coil; that stretch reads VKKSAALDTL…ANQALVSQEL (114 aa). WD repeat units follow at residues 338-377, 382-421, 424-458, 459-502, 504-543, 550-589, and 593-623; these read AHLS…LEAN, GAGG…SKET, GHKD…LGRA, YCSR…CIQV, PVQG…IRQV, KCSS…LETS, and PHCT…VLWH.

This sequence belongs to the WD repeat ATG16 family. Homooligomer. Heterooligomer with ATG16L2. Interacts with ATG5. Self-oligomerizes to form a 800-kDa complex composed of ATG12-ATG5 and ATG16L2. Interacts with RAB33B. Widely expressed.

Its subcellular location is the cytoplasm. It localises to the cytosol. In terms of biological role, may play a role in regulating epithelial homeostasis in an ATG16L1-dependent manner. The protein is Protein Atg16l2 (Atg16l2) of Mus musculus (Mouse).